The following is a 137-amino-acid chain: Small ribosomal subunit protein uS11 (137 aa).

Positions 116–137 (EDVTPVPSDSTRKKGGRRGRRL) are disordered. Basic residues predominate over residues 128-137 (KKGGRRGRRL).

It belongs to the universal ribosomal protein uS11 family.

This Kluyveromyces lactis (strain ATCC 8585 / CBS 2359 / DSM 70799 / NBRC 1267 / NRRL Y-1140 / WM37) (Yeast) protein is Small ribosomal subunit protein uS11 (RPS14).